The following is a 533-amino-acid chain: MTRVLGIEGTAWCASAAVFDAETDAVFIDSDAYVPESGGIHPREAAEHMREAVPSVVEAALDHVESNWGDPADAIDAVAFSRGPGLGPCLRIAGTAARSLAGTLSCPLVGVNHMVAHLEIGRHRSGFESPVCLNASGANAHVLGYHNGRYRVLGETMDTGVGNAIDKFTRHVGWSHPGGPKVESHAEDGDYVELPYVVKGMDFSFSGIMSAAKQAYDDGTPVADVCCGLQETIFAMLAEVSERALSLTGADELVVGGGVAQNSRLQEMLTQMCENRGAAIYVPEPRFLRDNAGMIAVLGAKMYEAGDIISIPESGVRPDFRPDEVPVSWRDDEAVARPVPTDERRQGAEAVVDIDADGGRVTKRRLEKAYRHPVLDSRLRSQRTRSEARLTSEARRQGVPTPVVYDVDPDAGRLVFQYVGDADLKTALSESAVRDVGRHLAACHAAGFVHGDPTPRNVRVGEDRAFLIDFGLGYYTDAVEDYAMDLHVFEGALGGTADDPTAQITAFEDAYRSAGDGAVVDHLREIETRGRYQ.

The segment at 1 to 329 (MTRVLGIEGT…FRPDEVPVSW (329 aa)) is kae1. Positions 113 and 117 each coordinate Fe cation. L-threonylcarbamoyladenylate is bound by residues 134 to 138 (NASGA), Asp-166, Gly-179, Glu-183, and Asn-262. Asp-290 is a Fe cation binding site. One can recognise a Protein kinase domain in the interval 338 to 533 (PVPTDERRQG…REIETRGRYQ (196 aa)). Residues 345 to 352 (RQGAEAVV) and Lys-363 contribute to the ATP site. Residue Asp-452 is the Proton acceptor; for kinase activity of the active site.

It in the N-terminal section; belongs to the KAE1 / TsaD family. The protein in the C-terminal section; belongs to the protein kinase superfamily. Tyr protein kinase family. BUD32 subfamily. As to quaternary structure, component of the KEOPS complex that consists of Kae1, Bud32, Cgi121 and Pcc1; the whole complex dimerizes. Fe(2+) serves as cofactor.

The protein localises to the cytoplasm. It carries out the reaction L-seryl-[protein] + ATP = O-phospho-L-seryl-[protein] + ADP + H(+). The enzyme catalyses L-threonyl-[protein] + ATP = O-phospho-L-threonyl-[protein] + ADP + H(+). The catalysed reaction is L-threonylcarbamoyladenylate + adenosine(37) in tRNA = N(6)-L-threonylcarbamoyladenosine(37) in tRNA + AMP + H(+). Required for the formation of a threonylcarbamoyl group on adenosine at position 37 (t(6)A37) in tRNAs that read codons beginning with adenine. Is a component of the KEOPS complex that is probably involved in the transfer of the threonylcarbamoyl moiety of threonylcarbamoyl-AMP (TC-AMP) to the N6 group of A37. The Kae1 domain likely plays a direct catalytic role in this reaction. The Bud32 domain probably displays kinase activity that regulates Kae1 function. This Natronomonas pharaonis (strain ATCC 35678 / DSM 2160 / CIP 103997 / JCM 8858 / NBRC 14720 / NCIMB 2260 / Gabara) (Halobacterium pharaonis) protein is Probable bifunctional tRNA threonylcarbamoyladenosine biosynthesis protein.